A 215-amino-acid chain; its full sequence is Transmembrane protein 267 (215 aa).

A run of 3 helical transmembrane segments spans residues 77–97 (FGEI…HFLL), 114–134 (FLHC…TMHF), and 178–198 (FWLY…VMYF).

It localises to the membrane. The polypeptide is Transmembrane protein 267 (TMEM267) (Bos taurus (Bovine)).